A 67-amino-acid chain; its full sequence is Probable tautomerase K2 (67 aa).

The Proton acceptor; via imino nitrogen role is filled by P2.

The protein belongs to the 4-oxalocrotonate tautomerase family.

The chain is Probable tautomerase K2 from Dickeya dadantii (strain 3937) (Erwinia chrysanthemi (strain 3937)).